Reading from the N-terminus, the 216-residue chain is Proenkephalin-A-B (216 aa).

5 propeptides span residues 64–85 (MDELYHAEPEEDDAGGEILAKN), 93–131 (EYDSNRDASDLLRELLATSGDPESAIYHDNNSETPGEMN), 144–155 (STDLEDETRGIQ), 165–175 (VGRPEWWQDYQ), and 183–207 (TRFTDSFLPSDEDGESYSKENPDME). Residues 114 to 133 (PESAIYHDNNSETPGEMNKR) form a disordered region.

Belongs to the opioid neuropeptide precursor family. The N-terminal domain contains 6 conserved cysteines thought to be involved in disulfide bonding and/or processing.

It localises to the secreted. Its function is as follows. Enkephalin neuropeptides compete with and mimic the effects of opiate drugs. They play a role in a number of physiologic functions, including pain perception and responses to stress. In Xenopus laevis (African clawed frog), this protein is Proenkephalin-A-B (penk-b).